A 473-amino-acid chain; its full sequence is Putative protein TIC 214 C-terminal part (473 aa).

The protein belongs to the TIC214 family. In terms of assembly, part of the Tic complex.

It localises to the plastid. Its subcellular location is the chloroplast. Functionally, involved in protein precursor import into chloroplasts. May be part of an intermediate translocation complex acting as a protein-conducting channel at the inner envelope. The chain is Putative protein TIC 214 C-terminal part from Anthoceros angustus (Hornwort).